Reading from the N-terminus, the 158-residue chain is Succinate dehydrogenase [ubiquinone] cytochrome b small subunit B, mitochondrial (158 aa).

Residues 1 to 29 constitute a mitochondrion transit peptide; sequence MAALVRISSLCHRGVSPLLFRPSSLIRPL. Topologically, residues 30–62 are mitochondrial matrix; the sequence is AVQQKDHDCSYLISARIHATPSNYAGSGSKAAT. Residues 63 to 84 traverse the membrane as a helical segment; sequence MHWTGERILSIALLSLAPVAYF. The Mitochondrial intermembrane segment spans residues 85–89; sequence CPSPA. The chain crosses the membrane as a helical span at residues 90-110; it reads VDYSLAAALTLHGHWGLGQVV. Histidine 101 serves as a coordination point for heme b. Residues 111 to 119 lie on the Mitochondrial matrix side of the membrane; the sequence is TDYVHGDAK. Tyrosine 113 contributes to the a ubiquinone binding site. Residues 120–141 traverse the membrane as a helical segment; it reads IKMANAGLFVLSTVTFAGLCYF. Over 142 to 158 the chain is Mitochondrial intermembrane; sequence NYHDVGICKAVALLWSK.

Belongs to the CybS family. As to quaternary structure, component of complex II composed of four subunits: the flavoprotein (FP) SDHA, iron-sulfur protein (IP) SDHB, and a cytochrome b560 composed of SDHC and SDHD.

The protein resides in the mitochondrion inner membrane. It functions in the pathway carbohydrate metabolism; tricarboxylic acid cycle. Its function is as follows. Membrane-anchoring subunit of succinate dehydrogenase (SDH) that is involved in complex II of the mitochondrial electron transport chain and is responsible for transferring electrons from succinate to ubiquinone (coenzyme Q). SDH also oxidizes malate to the non-canonical enol form of oxaloacetate, enol-oxaloacetate. Enol-oxaloacetate, which is a potent inhibitor of the succinate dehydrogenase activity, is further isomerized into keto-oxaloacetate. This is Succinate dehydrogenase [ubiquinone] cytochrome b small subunit B, mitochondrial (sdhdb) from Danio rerio (Zebrafish).